A 201-amino-acid chain; its full sequence is Large ribosomal subunit protein uL4 (201 aa).

The interval 46–71 (QKTRAEITGSGKKPWRQKGTGRARSG) is disordered.

This sequence belongs to the universal ribosomal protein uL4 family. As to quaternary structure, part of the 50S ribosomal subunit.

One of the primary rRNA binding proteins, this protein initially binds near the 5'-end of the 23S rRNA. It is important during the early stages of 50S assembly. It makes multiple contacts with different domains of the 23S rRNA in the assembled 50S subunit and ribosome. Its function is as follows. Forms part of the polypeptide exit tunnel. The sequence is that of Large ribosomal subunit protein uL4 from Klebsiella pneumoniae (strain 342).